Here is a 348-residue protein sequence, read N- to C-terminus: Zinc transporter ZIP13 (348 aa).

Topologically, residues M1 to C45 are cytoplasmic. The helical transmembrane segment at S46–I66 threads the bilayer. Residues E67–K83 are Lumenal-facing. A helical membrane pass occupies residues L84–A104. The Cytoplasmic segment spans residues W105–Y118. The chain crosses the membrane as a helical span at residues C119–F139. Residues P140–A219 lie on the Lumenal side of the membrane. Residues G144 to Y192 are disordered. Residues K149–S169 show a composition bias toward low complexity. A compositionally biased stretch (polar residues) spans P170–D182. Residues V220–L240 traverse the membrane as a helical segment. The XEXPHE-motif motif lies at H241 to E246. The Cytoplasmic portion of the chain corresponds to H241–K262. The chain crosses the membrane as a helical span at residues A263–C283. The Lumenal segment spans residues S284 to T294. The chain crosses the membrane as a helical span at residues T295–P315. The Cytoplasmic portion of the chain corresponds to D316–S326. Residues L327–M347 traverse the membrane as a helical segment. Residue D348 is a topological domain, lumenal.

This sequence belongs to the ZIP transporter (TC 2.A.5) family. Homodimer.

It localises to the golgi apparatus membrane. The protein localises to the cytoplasmic vesicle membrane. Its subcellular location is the endoplasmic reticulum membrane. It catalyses the reaction Zn(2+)(in) = Zn(2+)(out). Its function is as follows. Functions as a zinc transporter transporting Zn(2+) from the Golgi apparatus to the cytosol and thus influences the zinc level at least in areas of the cytosol. This chain is Zinc transporter ZIP13, found in Danio rerio (Zebrafish).